The sequence spans 434 residues: Histidinol dehydrogenase (434 aa).

Residues tyrosine 130, glutamine 188, and asparagine 211 each contribute to the NAD(+) site. The substrate site is built by serine 237, glutamine 259, and histidine 262. The Zn(2+) site is built by glutamine 259 and histidine 262. Residues glutamate 326 and histidine 327 each act as proton acceptor in the active site. Substrate is bound by residues histidine 327, aspartate 360, glutamate 414, and histidine 419. Residue aspartate 360 participates in Zn(2+) binding. Residue histidine 419 participates in Zn(2+) binding.

Belongs to the histidinol dehydrogenase family. In terms of assembly, homodimer. It depends on Zn(2+) as a cofactor.

The enzyme catalyses L-histidinol + 2 NAD(+) + H2O = L-histidine + 2 NADH + 3 H(+). It functions in the pathway amino-acid biosynthesis; L-histidine biosynthesis; L-histidine from 5-phospho-alpha-D-ribose 1-diphosphate: step 9/9. In terms of biological role, catalyzes the sequential NAD-dependent oxidations of L-histidinol to L-histidinaldehyde and then to L-histidine. The chain is Histidinol dehydrogenase from Salmonella choleraesuis (strain SC-B67).